A 342-amino-acid chain; its full sequence is Heat-inducible transcription repressor HrcA (342 aa).

This sequence belongs to the HrcA family.

Negative regulator of class I heat shock genes (grpE-dnaK-dnaJ and groELS operons). Prevents heat-shock induction of these operons. This Methylibium petroleiphilum (strain ATCC BAA-1232 / LMG 22953 / PM1) protein is Heat-inducible transcription repressor HrcA.